The primary structure comprises 335 residues: Histidinol-phosphatase (335 aa).

It belongs to the PHP hydrolase family. HisK subfamily.

It carries out the reaction L-histidinol phosphate + H2O = L-histidinol + phosphate. It functions in the pathway amino-acid biosynthesis; L-histidine biosynthesis; L-histidine from 5-phospho-alpha-D-ribose 1-diphosphate: step 8/9. The protein is Histidinol-phosphatase (HIS2) of Saccharomyces cerevisiae (strain ATCC 204508 / S288c) (Baker's yeast).